A 362-amino-acid polypeptide reads, in one-letter code: MSQVYNFSAGPAMLPAEVLRRAELELCNWHGLGRSVMEISHRSKEFLEVAHQAEQDLRDLLNVPENYKILFCHGGARGHFAALPLNLLGEKTTADYIDGGYWAKSAADEAEKYCSPNIIKIKTEIDGKIAVKPMKEWQLSDNAAYVHYCPNETIDGIAIHEEPDFDDKKIVIADYSSAILSQPLDVSRFGMIYAGAQKNIGPAGLTLVIIREDLLGKARKETPSVFDYTVLAENDSMFNTPPTFAWYLSGMVFKWLKEQGGLQEIAKRNYEKATLLYSAIDNSDFYINRIATENRSLMNVPFQMSSPALDAVFLKEAEEQGLVALKGHRVSGGMRASIYNAMPFAGVQALVDFMADFERRHA.

R42 is a binding site for L-glutamate. Residues A76–R77, W102, T153, D174, and Q197 contribute to the pyridoxal 5'-phosphate site. Position 198 is an N6-(pyridoxal phosphate)lysine (K198). N239–T240 is a binding site for pyridoxal 5'-phosphate.

Belongs to the class-V pyridoxal-phosphate-dependent aminotransferase family. SerC subfamily. In terms of assembly, homodimer. Pyridoxal 5'-phosphate serves as cofactor.

It is found in the cytoplasm. It carries out the reaction O-phospho-L-serine + 2-oxoglutarate = 3-phosphooxypyruvate + L-glutamate. The enzyme catalyses 4-(phosphooxy)-L-threonine + 2-oxoglutarate = (R)-3-hydroxy-2-oxo-4-phosphooxybutanoate + L-glutamate. Its pathway is amino-acid biosynthesis; L-serine biosynthesis; L-serine from 3-phospho-D-glycerate: step 2/3. It participates in cofactor biosynthesis; pyridoxine 5'-phosphate biosynthesis; pyridoxine 5'-phosphate from D-erythrose 4-phosphate: step 3/5. Catalyzes the reversible conversion of 3-phosphohydroxypyruvate to phosphoserine and of 3-hydroxy-2-oxo-4-phosphonooxybutanoate to phosphohydroxythreonine. In Proteus mirabilis (strain HI4320), this protein is Phosphoserine aminotransferase.